The following is a 397-amino-acid chain: Enoyl-[acyl-carrier-protein] reductase [NADH] FabV (397 aa).

NAD(+) contacts are provided by residues 48-53 (GASTGY), 74-75 (FE), 111-112 (DA), and 139-140 (LA). Tyr-225 provides a ligand contact to substrate. The active-site Proton donor is the Tyr-235. NAD(+) is bound by residues Lys-244 and 273-275 (VVT).

This sequence belongs to the TER reductase family. In terms of assembly, monomer.

The enzyme catalyses a 2,3-saturated acyl-[ACP] + NAD(+) = a (2E)-enoyl-[ACP] + NADH + H(+). It functions in the pathway lipid metabolism; fatty acid biosynthesis. Resistant to triclosan. Functionally, involved in the final reduction of the elongation cycle of fatty acid synthesis (FAS II). Catalyzes the NADH-dependent reduction of the carbon-carbon double bond in the enoyl moiety that is covalently linked to an acyl carrier protein (ACP). The protein is Enoyl-[acyl-carrier-protein] reductase [NADH] FabV of Aeromonas salmonicida (strain A449).